Consider the following 274-residue polypeptide: Aquaporin C (274 aa).

The Cytoplasmic segment spans residues 1 to 33; that stretch reads MPFLHLFTPYTNADNTKLILRVNESRLRLFTRQ. Residues 34–54 form a helical membrane-spanning segment; the sequence is LLAEFFGTLFVVYIVSGSTLA. The Extracellular segment spans residues 55 to 66; that stretch reads ANFAVSDPIVRV. Residues 67 to 87 traverse the membrane as a helical segment; that stretch reads CLICLVQGFAFAAIIWSISGI. The Cytoplasmic portion of the chain corresponds to 88–105; that stretch reads SGCQLNPAVTVGCVTTGR. An NPA 1 motif is present at residues 93–95; that stretch reads NPA. The helical transmembrane segment at 106–126 threads the bilayer; sequence MGILNGIAFIIFQCVGALVGA. Residues 127 to 154 lie on the Extracellular side of the membrane; it reads GMMKASLPTFYERDLSATTLATGVNVAR. The helical transmembrane segment at 155–175 threads the bilayer; sequence GFFLEMVTTSFLVFVVLGVAV. The Cytoplasmic segment spans residues 176–185; that stretch reads YNEWDPKISR. Residues 186-206 traverse the membrane as a helical segment; that stretch reads VAPLAIGCAVIAGVGFLNLFT. The Extracellular portion of the chain corresponds to 207–229; that stretch reads GGSLNPARSFGPAVFSDTWHRHY. Residues 211 to 213 carry the NPA 2 motif; sequence NPA. The chain crosses the membrane as a helical span at residues 230–250; sequence IYWFGPICGGIIAGLFWRIFL. Residues 251-274 lie on the Cytoplasmic side of the membrane; sequence SEKVLLIDRPYTDFHRSTYGTATK.

The protein belongs to the MIP/aquaporin (TC 1.A.8) family.

It is found in the cell membrane. In terms of biological role, may form a water-specific channel. The polypeptide is Aquaporin C (wacA) (Dictyostelium discoideum (Social amoeba)).